Here is a 454-residue protein sequence, read N- to C-terminus: Bifunctional protein GlmU (454 aa).

The segment at 1 to 226 (MSLDIVILAA…AMEVQGANDR (226 aa)) is pyrophosphorylase. Residues 8–11 (LAAG), lysine 22, glutamine 73, 78–79 (GT), 99–101 (YGD), glycine 136, glutamate 151, asparagine 166, and asparagine 224 each bind UDP-N-acetyl-alpha-D-glucosamine. Residue aspartate 101 coordinates Mg(2+). Mg(2+) is bound at residue asparagine 224. A linker region spans residues 227 to 247 (LQLAQLERHYQSRVARRLMAQ). The tract at residues 248 to 454 (GVTLRDPARF…GWQRPTKQKK (207 aa)) is N-acetyltransferase. Residues arginine 330 and lysine 348 each coordinate UDP-N-acetyl-alpha-D-glucosamine. Histidine 360 functions as the Proton acceptor in the catalytic mechanism. Residues tyrosine 363 and asparagine 374 each coordinate UDP-N-acetyl-alpha-D-glucosamine. Acetyl-CoA is bound by residues alanine 377, 383 to 384 (NY), serine 402, alanine 420, and arginine 437.

The protein in the N-terminal section; belongs to the N-acetylglucosamine-1-phosphate uridyltransferase family. This sequence in the C-terminal section; belongs to the transferase hexapeptide repeat family. Homotrimer. It depends on Mg(2+) as a cofactor.

The protein localises to the cytoplasm. The catalysed reaction is alpha-D-glucosamine 1-phosphate + acetyl-CoA = N-acetyl-alpha-D-glucosamine 1-phosphate + CoA + H(+). It carries out the reaction N-acetyl-alpha-D-glucosamine 1-phosphate + UTP + H(+) = UDP-N-acetyl-alpha-D-glucosamine + diphosphate. The protein operates within nucleotide-sugar biosynthesis; UDP-N-acetyl-alpha-D-glucosamine biosynthesis; N-acetyl-alpha-D-glucosamine 1-phosphate from alpha-D-glucosamine 6-phosphate (route II): step 2/2. It participates in nucleotide-sugar biosynthesis; UDP-N-acetyl-alpha-D-glucosamine biosynthesis; UDP-N-acetyl-alpha-D-glucosamine from N-acetyl-alpha-D-glucosamine 1-phosphate: step 1/1. Its pathway is bacterial outer membrane biogenesis; LPS lipid A biosynthesis. In terms of biological role, catalyzes the last two sequential reactions in the de novo biosynthetic pathway for UDP-N-acetylglucosamine (UDP-GlcNAc). The C-terminal domain catalyzes the transfer of acetyl group from acetyl coenzyme A to glucosamine-1-phosphate (GlcN-1-P) to produce N-acetylglucosamine-1-phosphate (GlcNAc-1-P), which is converted into UDP-GlcNAc by the transfer of uridine 5-monophosphate (from uridine 5-triphosphate), a reaction catalyzed by the N-terminal domain. The sequence is that of Bifunctional protein GlmU from Azotobacter vinelandii (strain DJ / ATCC BAA-1303).